Here is a 531-residue protein sequence, read N- to C-terminus: GTPase Obg (531 aa).

Residues 2 to 159 (ASFVDRVIVH…QEVELELKSI (158 aa)) enclose the Obg domain. In terms of domain architecture, OBG-type G spans 160 to 341 (ADIALVGFPS…LSFAMAALVS (182 aa)). GTP-binding positions include 166-173 (GFPSAGKS), 191-195 (FTTLV), 212-215 (DVPG), 293-296 (NKVD), and 322-324 (STA). Mg(2+) is bound by residues S173 and T193. The segment at 346-365 (QEEQREQQRQTVPVLQPEPV) is disordered. In terms of domain architecture, OCT spans 368–453 (RRGRDRREFV…ENGVVFDWEP (86 aa)). A disordered region spans residues 459–531 (AELLGGPRGS…TSETKETNEK (73 aa)). Basic and acidic residues-rich tracts occupy residues 468-507 (SDLR…ERRA) and 514-531 (VDAR…TNEK).

It belongs to the TRAFAC class OBG-HflX-like GTPase superfamily. OBG GTPase family. As to quaternary structure, monomer. Requires Mg(2+) as cofactor.

It is found in the cytoplasm. An essential GTPase which binds GTP, GDP and possibly (p)ppGpp with moderate affinity, with high nucleotide exchange rates and a fairly low GTP hydrolysis rate. Plays a role in control of the cell cycle, stress response, ribosome biogenesis and in those bacteria that undergo differentiation, in morphogenesis control. The sequence is that of GTPase Obg from Kocuria rhizophila (strain ATCC 9341 / DSM 348 / NBRC 103217 / DC2201).